Reading from the N-terminus, the 528-residue chain is Phosphoenolpyruvate carboxykinase (ATP) (528 aa).

3 residues coordinate substrate: Arg54, Tyr190, and Lys196. Residues Lys196, His215, and 231-239 each bind ATP; that span reads GLSGTGKTT. Lys196 and His215 together coordinate Mn(2+). Position 252 (Asp252) interacts with Mn(2+). ATP contacts are provided by Glu280, Arg316, and Thr441. Arg316 is a binding site for substrate.

This sequence belongs to the phosphoenolpyruvate carboxykinase (ATP) family. It depends on Mn(2+) as a cofactor.

Its subcellular location is the cytoplasm. It catalyses the reaction oxaloacetate + ATP = phosphoenolpyruvate + ADP + CO2. It functions in the pathway carbohydrate biosynthesis; gluconeogenesis. In terms of biological role, involved in the gluconeogenesis. Catalyzes the conversion of oxaloacetate (OAA) to phosphoenolpyruvate (PEP) through direct phosphoryl transfer between the nucleoside triphosphate and OAA. This is Phosphoenolpyruvate carboxykinase (ATP) from Sulfurimonas denitrificans (strain ATCC 33889 / DSM 1251) (Thiomicrospira denitrificans (strain ATCC 33889 / DSM 1251)).